Consider the following 1178-residue polypeptide: Leucine--tRNA ligase, cytoplasmic (1178 aa).

Positions 54 and 56 each coordinate L-leucine. The 'HIGH' region motif lies at 62–65; sequence HLGH. Residue S169 is modified to Phosphoserine. The tract at residues 262-511 is editing domain; that stretch reads GPQEYTLVKL…DAGDALIYME (250 aa). Residues L596 and S599 each coordinate L-leucine. Residues 718-722 carry the 'KMSKS' region motif; the sequence is KMSKS. K721 is a binding site for ATP. Position 722 is a phosphoserine (S722). N6-acetyllysine is present on residues K972 and K1049.

It belongs to the class-I aminoacyl-tRNA synthetase family.

The protein resides in the cytoplasm. The enzyme catalyses tRNA(Leu) + L-leucine + ATP = L-leucyl-tRNA(Leu) + AMP + diphosphate. The catalysed reaction is L-methionyl-tRNA(Leu) + H2O = tRNA(Leu) + L-methionine + H(+). With respect to regulation, 5-fluoro-1,3-dihydro-1-hydroxy-1,2-benzoxaborole inhibits LARS1 by forming a covalent adduct with the 3' adenosine of tRNA(Leu) at the editing site, thus locking the enzyme in an inactive conformation. Its function is as follows. Aminoacyl-tRNA synthetase that catalyzes the specific attachment of leucine to its cognate tRNA (tRNA(Leu)). It performs tRNA aminoacylation in a two-step reaction: Leu is initially activated by ATP to form a leucyl-adenylate (Leu-AMP) intermediate; then the leucyl moiety is transferred to the acceptor 3' end of the tRNA to yield leucyl-tRNA. To improve the fidelity of catalytic reactions, it is also able to hydrolyze misactivated aminoacyl-adenylate intermediates (pre-transfer editing) and mischarged aminoacyl-tRNAs (post-transfer editing). This chain is Leucine--tRNA ligase, cytoplasmic (Lars1), found in Mus musculus (Mouse).